We begin with the raw amino-acid sequence, 1142 residues long: Serine/threonine-protein kinase GIN4 (1142 aa).

The region spanning Trp19–Leu289 is the Protein kinase domain. ATP is bound by residues Leu25–Val33 and Lys48. The active-site Proton acceptor is Asp156. Disordered regions lie at residues Lys378–Ser412 and Ala425–Arg469. Low complexity predominate over residues Ser382–Ser395. Ser406 bears the Phosphoserine mark. Low complexity predominate over residues Ala425–Lys440. Residues Arg441–Leu452 show a composition bias toward basic residues. Polar residues predominate over residues Thr454–Ser465. 8 positions are modified to phosphoserine: Ser465, Ser471, Ser617, Ser689, Ser719, Ser805, Ser807, and Ser883. Residues Asp676 to Asn698 form a disordered region. At Thr884 the chain carries Phosphothreonine. The segment at Asn903–Phe1031 is disordered. 3 stretches are compositionally biased toward basic and acidic residues: residues Asn923–His937, Lys962–Asp984, and Lys996–Lys1021. Ser930 is subject to Phosphoserine.

It belongs to the protein kinase superfamily. CAMK Ser/Thr protein kinase family. NIM1 subfamily. Component of the GIN4 complex composed of at least BNI5, CDC3, CDC10, CDC11, CDC12, GIN4, NAP1 and SHS1 which forms a ring at the bud neck.

The protein localises to the cytoplasm. Its subcellular location is the bud neck. It carries out the reaction L-seryl-[protein] + ATP = O-phospho-L-seryl-[protein] + ADP + H(+). The enzyme catalyses L-threonyl-[protein] + ATP = O-phospho-L-threonyl-[protein] + ADP + H(+). Its function is as follows. Serine/threonine-protein kinase which regulates the localization and the function of the septins during mitosis. Phosphorylates SHS1. In Saccharomyces cerevisiae (strain ATCC 204508 / S288c) (Baker's yeast), this protein is Serine/threonine-protein kinase GIN4 (GIN4).